The chain runs to 497 residues: Angiopoietin-1 (497 aa).

The N-terminal stretch at 1 to 15 is a signal peptide; the sequence is MTVFLSFAFLAAILT. N92, N122, N154, N243, and N294 each carry an N-linked (GlcNAc...) asparagine glycan. The stretch at 153 to 261 forms a coiled coil; the sequence is LNQTSRLEIQ…LELMDTVHNL (109 aa). The Fibrinogen C-terminal domain occupies 276–496; sequence KEEEKPFRDC…STTMMIRPLD (221 aa). 2 disulfide bridges follow: C285–C314 and C438–C451.

In terms of assembly, homooligomer. Interacts with TEK/TIE2. Interacts with SVEP1/polydom. Interacts with THBD; this interaction significantly inhibits the generation of activated PC and TAFIa/CPB2 by the thrombin/thrombomodulin complex.

The protein localises to the secreted. Its function is as follows. Binds and activates TIE2 receptor by inducing its tyrosine phosphorylation. Implicated in endothelial developmental processes later and distinct from that of VEGF. Appears to play a crucial role in mediating reciprocal interactions between the endothelium and surrounding matrix and mesenchyme. Mediates blood vessel maturation/stability. It may play an important role in the heart early development. In Bos taurus (Bovine), this protein is Angiopoietin-1 (ANGPT1).